A 400-amino-acid chain; its full sequence is MSKTHDVIELTEKFGAHNYHPLPIVISEAKGIWVTDPEGNRYMDMLSAYSAVNQGHCHPKIIQALKDQADKITLTSRAFYNDQLGRFYDKVVTLTKKQMVLPMNTGAEAVETAVKTARRWAYDVKGIPGQAEIIVCSGNFHGRTMAAVSMSTEAEYQRGFGPLLPGFKVVPYGDIDAFEAAITENTAAFIVEPIQGEAGIIIPPAGYLKRASELCKEHNVLFVADEIQSGLGRSGKWFAIEWEDVTPDMYILGKALGGGVFPISCVAADQEILSVFNPGSHGSTFGGNPLASAVSVAALEVLEEENLPERSLELGTYFMDRLKSIDNPMIRDVRGRGLFIGIELTESARPYCEALKERGLLCKETHETVIRLAPPLVITKEELDQAFEAIEAVLAPAAIS.

An N6-(pyridoxal phosphate)lysine modification is found at K254.

Belongs to the class-III pyridoxal-phosphate-dependent aminotransferase family. OAT subfamily. The cofactor is pyridoxal 5'-phosphate.

The protein localises to the cytoplasm. It catalyses the reaction a 2-oxocarboxylate + L-ornithine = L-glutamate 5-semialdehyde + an L-alpha-amino acid. Its pathway is amino-acid biosynthesis; L-proline biosynthesis; L-glutamate 5-semialdehyde from L-ornithine: step 1/1. Catalyzes the interconversion of ornithine to glutamate semialdehyde. The protein is Ornithine aminotransferase of Exiguobacterium sp. (strain ATCC BAA-1283 / AT1b).